The chain runs to 689 residues: Glycine--tRNA ligase beta subunit (689 aa).

It belongs to the class-II aminoacyl-tRNA synthetase family. In terms of assembly, tetramer of two alpha and two beta subunits.

Its subcellular location is the cytoplasm. The catalysed reaction is tRNA(Gly) + glycine + ATP = glycyl-tRNA(Gly) + AMP + diphosphate. This is Glycine--tRNA ligase beta subunit from Salmonella paratyphi C (strain RKS4594).